Reading from the N-terminus, the 243-residue chain is MTRKDAKSSALVLFSGGQDSATCLAWALDRYETVETLGFDYGQRHRVELECREGFRSAVARTFPEWGERLGDDHMIDLSVLGSISETAMTREIEIHAASNGLPNTFVPGRNLMFMTIAAAIAYRRGLRVLVGGMCETDFSGYPDCRDDTMKALQVALNLGMDSRFVLETPLMWIDKADTWRLAHELGGDELVELIRVETHTCYLGERAELHAWGFGCGECPACRLRKRGYEAYLSGEQVTEPA.

14–24 (FSGGQDSATCL) lines the ATP pocket. 4 residues coordinate Zn(2+): cysteine 202, cysteine 217, cysteine 220, and cysteine 223.

This sequence belongs to the QueC family. It depends on Zn(2+) as a cofactor.

The catalysed reaction is 7-carboxy-7-deazaguanine + NH4(+) + ATP = 7-cyano-7-deazaguanine + ADP + phosphate + H2O + H(+). The protein operates within purine metabolism; 7-cyano-7-deazaguanine biosynthesis. Its function is as follows. Catalyzes the ATP-dependent conversion of 7-carboxy-7-deazaguanine (CDG) to 7-cyano-7-deazaguanine (preQ(0)). The protein is 7-cyano-7-deazaguanine synthase of Paraburkholderia phymatum (strain DSM 17167 / CIP 108236 / LMG 21445 / STM815) (Burkholderia phymatum).